A 429-amino-acid chain; its full sequence is Polypyrimidine tract-binding protein homolog 2 (429 aa).

Ser-2 is modified (N-acetylserine). RRM domains follow at residues 18–96, 110–197, and 243–323; these read KVLH…YSNR, GNVL…YSAH, and SNVL…YSRH. Residues 331 to 429 are disordered; that stretch reads NNDRSRDYTM…QHYGGPGPMH (99 aa). Residues 367 to 381 show a composition bias toward low complexity; the sequence is GGSHHQQQQQPQGGW. Positions 382-397 are enriched in gly residues; it reads VQPGGQGSMGMGGGGH.

The protein resides in the nucleus. Its function is as follows. Plays a role in pre-mRNA splicing. Binds to the polypyrimidine tract of introns. May promote the binding of U2 snRNP to pre-mRNA. The chain is Polypyrimidine tract-binding protein homolog 2 from Arabidopsis thaliana (Mouse-ear cress).